A 718-amino-acid chain; its full sequence is uncharacterized protein (718 aa).

Helical transmembrane passes span 9-29 (VISTIPVFIAVNIAAVGIWFF), 60-80 (NVFFTLIAFSISSFIVQLHIG), 83-103 (IQYIVLMTVLTFIFTMIGAVG), 136-156 (VMILCGTLLYSVVTLIVYLFF), 391-411 (IVVFLCCAIVEFFQFNLGYWI), and 506-526 (LLDTLLGAAISWFAVSYLWPD).

This sequence belongs to the YccS/YhfK family.

It localises to the cell membrane. This is an uncharacterized protein from Haemophilus influenzae (strain ATCC 51907 / DSM 11121 / KW20 / Rd).